A 78-amino-acid chain; its full sequence is Acyl carrier protein (78 aa).

The 75-residue stretch at 4–78 (AEIKDKVYDI…QQAIDYIVKK (75 aa)) folds into the Carrier domain. Residue S39 is modified to O-(pantetheine 4'-phosphoryl)serine.

This sequence belongs to the acyl carrier protein (ACP) family. In terms of processing, 4'-phosphopantetheine is transferred from CoA to a specific serine of apo-ACP by AcpS. This modification is essential for activity because fatty acids are bound in thioester linkage to the sulfhydryl of the prosthetic group.

It is found in the cytoplasm. The protein operates within lipid metabolism; fatty acid biosynthesis. In terms of biological role, carrier of the growing fatty acid chain in fatty acid biosynthesis. The protein is Acyl carrier protein of Chlorobium limicola (strain DSM 245 / NBRC 103803 / 6330).